The primary structure comprises 143 residues: Protein Wnt-1 (143 aa).

A lipid anchor (O-palmitoleoyl serine; by PORCN) is attached at S1. The tract at residues 38–81 is disordered; that stretch reads EGVRGNSNRGDRGDRRDRGDRSDNGGTEANFQPYNSNHKPPGPR. The segment covering 46 to 60 has biased composition (basic and acidic residues); the sequence is RGDRGDRRDRGDRSD. Polar residues predominate over residues 64 to 75; sequence TEANFQPYNSNH. C109 and C124 are joined by a disulfide. N-linked (GlcNAc...) asparagine glycans are attached at residues N110 and N111.

It belongs to the Wnt family. Palmitoleoylation is required for efficient binding to frizzled receptors. Palmitoleoylation is necessary for proper trafficking to cell surface. Depalmitoleoylated by NOTUM, leading to inhibit Wnt signaling pathway.

Its subcellular location is the secreted. It is found in the extracellular space. It localises to the extracellular matrix. Functionally, ligand for members of the frizzled family of seven transmembrane receptors. Probable developmental protein. The protein is Protein Wnt-1 (WNT-1) of Evasterias troschelii (Mottled sea star).